Here is a 219-residue protein sequence, read N- to C-terminus: Transcriptional regulatory protein QseB (219 aa).

The 115-residue stretch at 2-116 folds into the Response regulatory domain; that stretch reads RILLVEDDTL…EVAARLEALV (115 aa). Asp-51 bears the 4-aspartylphosphate mark. The segment at residues 124-218 is a DNA-binding region (ompR/PhoB-type); sequence SSELRHGQVT…VHGIGYTLGD (95 aa).

Post-translationally, phosphorylated by QseC.

The protein localises to the cytoplasm. Member of a two-component regulatory system QseB/QseC. Activates the flagella regulon by activating transcription of flhDC. This is Transcriptional regulatory protein QseB (qseB) from Salmonella typhimurium (strain LT2 / SGSC1412 / ATCC 700720).